Here is a 306-residue protein sequence, read N- to C-terminus: Porphobilinogen deaminase (306 aa).

At Cys239 the chain carries S-(dipyrrolylmethanemethyl)cysteine.

Belongs to the HMBS family. In terms of assembly, monomer. Dipyrromethane serves as cofactor.

The enzyme catalyses 4 porphobilinogen + H2O = hydroxymethylbilane + 4 NH4(+). It functions in the pathway porphyrin-containing compound metabolism; protoporphyrin-IX biosynthesis; coproporphyrinogen-III from 5-aminolevulinate: step 2/4. Its function is as follows. Tetrapolymerization of the monopyrrole PBG into the hydroxymethylbilane pre-uroporphyrinogen in several discrete steps. This chain is Porphobilinogen deaminase (hemC), found in Helicobacter pylori (strain J99 / ATCC 700824) (Campylobacter pylori J99).